The sequence spans 710 residues: Zinc finger and BTB domain-containing protein 24 (710 aa).

Positions 37–103 (CDITLIVENV…IYTGYLHASE (67 aa)) constitute a BTB domain. Disordered stretches follow at residues 134-176 (APKP…EGRS) and 202-256 (EEDS…SRRR). The segment at residues 159 to 171 (KRKRGRPRKANGL) is a DNA-binding region (a.T hook). Composition is skewed to basic and acidic residues over residues 202 to 219 (EEDS…KESE) and 231 to 244 (PAEK…KAGD). 8 consecutive C2H2-type zinc fingers follow at residues 293–315 (ARCK…QRRH), 321–343 (FKCN…TRMH), 349–371 (YTCT…MSLH), 377–399 (FTCD…YRVH), 405–427 (PECS…LRTH), 433–455 (FTCE…IRIH), 461–483 (YSCS…CILH), and 489–511 (FSCP…LKIH). A disordered region spans residues 651-676 (EQTTSSVPAADTGARATPVPSTRPGA).

It belongs to the krueppel C2H2-type zinc-finger protein family. In terms of assembly, interacts with MN1. In terms of tissue distribution, widely expressed. Highest level in liver, testis and kidney.

It localises to the nucleus. May be involved in BMP2-induced transcription. This chain is Zinc finger and BTB domain-containing protein 24 (Zbtb24), found in Mus musculus (Mouse).